Consider the following 318-residue polypeptide: tRNA U34 carboxymethyltransferase (318 aa).

Carboxy-S-adenosyl-L-methionine contacts are provided by lysine 88, tryptophan 102, lysine 107, glycine 126, methionine 192, tyrosine 196, and arginine 311.

It belongs to the class I-like SAM-binding methyltransferase superfamily. CmoB family. In terms of assembly, homotetramer.

The catalysed reaction is carboxy-S-adenosyl-L-methionine + 5-hydroxyuridine(34) in tRNA = 5-carboxymethoxyuridine(34) in tRNA + S-adenosyl-L-homocysteine + H(+). Catalyzes carboxymethyl transfer from carboxy-S-adenosyl-L-methionine (Cx-SAM) to 5-hydroxyuridine (ho5U) to form 5-carboxymethoxyuridine (cmo5U) at position 34 in tRNAs. The polypeptide is tRNA U34 carboxymethyltransferase (Pseudomonas fluorescens (strain Pf0-1)).